The sequence spans 610 residues: UvrABC system protein C (610 aa).

Positions 16 to 94 (SQPGVYRMYD…IKLYQPRYNV (79 aa)) constitute a GIY-YIG domain. The region spanning 204–239 (DQVLTQLIARMEKASQDLAFEEAARIRDQIQAVRRV) is the UVR domain.

Belongs to the UvrC family. Interacts with UvrB in an incision complex.

It is found in the cytoplasm. Functionally, the UvrABC repair system catalyzes the recognition and processing of DNA lesions. UvrC both incises the 5' and 3' sides of the lesion. The N-terminal half is responsible for the 3' incision and the C-terminal half is responsible for the 5' incision. This is UvrABC system protein C from Salmonella enteritidis PT4 (strain P125109).